The primary structure comprises 625 residues: Putative xanthine/uracil permease C887.17 (625 aa).

The next 10 helical transmembrane spans lie at Ala49 to Val69, Ala107 to Met127, Glu154 to Leu174, Ala192 to Ile212, Met246 to Tyr263, Phe328 to Tyr348, Val369 to Val389, Gly406 to Phe426, Ile429 to Thr449, and Ile465 to Ile485. Positions Glu595 to Ile625 are disordered.

Belongs to the nucleobase:cation symporter-2 (NCS2) (TC 2.A.40) family. Azg-like subfamily.

Its subcellular location is the golgi apparatus membrane. This is Putative xanthine/uracil permease C887.17 from Schizosaccharomyces pombe (strain 972 / ATCC 24843) (Fission yeast).